Reading from the N-terminus, the 521-residue chain is Melanopsin (521 aa).

Topologically, residues 1 to 71 are extracellular; it reads MDSPSGPRVL…VDVPDHAHYT (71 aa). N-linked (GlcNAc...) asparagine glycosylation is found at asparagine 30 and asparagine 34. The chain crosses the membrane as a helical span at residues 72 to 92; the sequence is LGTVILLVGLTGMLGNLTVIY. The Cytoplasmic portion of the chain corresponds to 93–106; that stretch reads TFCRNRGLRTPANM. A helical transmembrane segment spans residues 107–127; that stretch reads FIINLAVSDFLMSVTQAPVFF. The Extracellular portion of the chain corresponds to 128–143; that stretch reads ASSLYKKWLFGETGCE. Cysteine 142 and cysteine 220 form a disulfide bridge. A helical membrane pass occupies residues 144-164; it reads FYAFCGAVFGITSMITLTAIA. The Cytoplasmic segment spans residues 165–187; the sequence is MDRYLVITRPLATIGRGSKRRTA. Residues 188-208 form a helical membrane-spanning segment; the sequence is LVLLGVWLYALAWSLPPFFGW. Residues 209-237 are Extracellular-facing; that stretch reads SAYVPEGLLTSCSWDYMTFTPQVRAYTML. A helical transmembrane segment spans residues 238–258; that stretch reads LFCFVFFLPLLIIIFCYIFIF. Residues 259 to 293 lie on the Cytoplasmic side of the membrane; sequence RAIRETGRACEGCGESPLRQRRQWQRLQSEWKMAK. Residues 294–314 traverse the membrane as a helical segment; it reads VALIVILLFVLSWAPYSTVAL. The Extracellular segment spans residues 315–329; that stretch reads VAFAGYSHILTPYMS. Residues 330-350 traverse the membrane as a helical segment; it reads SVPAVIAKASAIHNPIIYAIT. Lysine 337 carries the N6-(retinylidene)lysine modification. The Cytoplasmic portion of the chain corresponds to 351–521; it reads HPKYRVAIAQ…LEDDVTLRHL (171 aa). Residues 445-486 are disordered; it reads GELKASSSPQVQRSKTPKVPGPSTCRPMKGQGARPSSLRGDQ. The span at 449–458 shows a compositional bias: polar residues; it reads ASSSPQVQRS.

Belongs to the G-protein coupled receptor 1 family. Opsin subfamily. In terms of tissue distribution, expressed in the retinal pigment epithelium and ganglion cell layer (at protein level). Also expressed in amacrine cell layers of the retina. Weakly expressed in vibrissae, and tail. As to expression, observed with processes in the outer strata of inner plexiform layer (IPL) close to the inner nuclear layer (INL) or is found to be bistratified with processes located both in the inner (ON) or outer (OFF) layers of the IPL (at protein level). A second population of isoform 1 is identified in processes which are confined to the inner layer of the IPL near to the ganglion cell layer (GCL) (at protein level). About 40 times more abundant than isoform 1 in the retina (at protein level). Isoform 2 is involved in processes localized to the outer IPL or is bistratified with processes in both the inner and outer layers of the IPL (at protein level). Isoform 2 is absent in the processes confined only to the inner layer of the IPL (at protein level).

Its subcellular location is the cell membrane. The protein localises to the cell projection. It is found in the axon. The protein resides in the dendrite. It localises to the perikaryon. Its function is as follows. Photoreceptor that binds cis-retinaldehydes. Contributes to pupillar reflex, photoentrainment and other non-image forming responses to light. May be involved in the optokinetic visual tracking response. May be involved in the regulation of retinal hyaloid vessel growth and regression. In Mus musculus (Mouse), this protein is Melanopsin (Opn4).